The primary structure comprises 1793 residues: Brefeldin A-inhibited guanine nucleotide-exchange protein 2 (1793 aa).

Ala-2 carries the N-acetylalanine modification. Disordered stretches follow at residues 45–71 (NSLQKSPPPSSSAATDSESESSVPGPL), 266–299 (TMSGSGSGSGSGGQDGAYGTTTVETTNPTDLLDS), and 579–606 (GSPQLANGNADESADGSDTYSESSGGTS). The segment covering 55–66 (SSAATDSESESS) has biased composition (low complexity). A compositionally biased stretch (gly residues) spans 270-281 (SGSGSGSGGQDG). Polar residues-rich tracts occupy residues 284–294 (GTTTVETTNPT) and 594–605 (GSDTYSESSGGT). Position 595 is a phosphoserine (Ser-595). The SEC7 domain maps to 610-797 (AIEQRRAYKL…RSLYERITKH (188 aa)). Glu-712 is a catalytic residue. Over residues 1311–1327 (NKYKGTSGKIPQSSLHS) the composition is skewed to polar residues. Residues 1311–1333 (NKYKGTSGKIPQSSLHSGKSGKQ) form a disordered region.

Homodimer.

The protein resides in the cytoplasm. Its subcellular location is the cytosol. It is found in the membrane. Its activity is regulated as follows. Inhibited by brefeldin A. Functionally, activates the ARF proteins by exchanging bound GDP for free GTP. Plays a role in vesicular protein sorting. The protein is Brefeldin A-inhibited guanine nucleotide-exchange protein 2 (BIG2) of Arabidopsis thaliana (Mouse-ear cress).